The following is a 126-amino-acid chain: uncharacterized protein (126 aa).

Positions 1 to 46 (MREEEAAAVVTVPQAGRDGEQPGPPAGLGCAAVRGEPGGGGPQESR) are disordered.

It is found in the cytoplasm. The protein resides in the cytoskeleton. The protein localises to the cilium basal body. This is an uncharacterized protein from Bos taurus (Bovine).